A 316-amino-acid polypeptide reads, in one-letter code: Cuticle collagen 13 (316 aa).

The first 36 residues, 1-36, serve as a signal peptide directing secretion; it reads MSEDLKQIAQETESLRKVAFFGIAVSTIATLTAIIA. Low complexity-rich tracts occupy residues 127-157 and 183-204; these read SGAA…PGQD and APGQ…GAAL. Positions 127–316 are disordered; sequence SGAAGPAGSP…CPPPRTAPGY (190 aa). Triple-helical region regions lie at residues 128-157, 176-202, 206-235, 240-266, and 269-304; these read GAAG…PGQD, GPPG…SGGA, GPPG…PGQV, GTPG…AGSS, and GGPG…EGAC. Residues 205-217 are compositionally biased toward pro residues; sequence PGPPGPAGPPGPA. The segment covering 219-234 has biased composition (low complexity); that stretch reads QPGSNGNAGAPGAPGQ. Over residues 241-251 the composition is skewed to pro residues; the sequence is TPGPAGPPGSP. 2 stretches are compositionally biased toward low complexity: residues 256–266 and 276–295; these read APGQPGQAGSS and DAGA…PGQD. Positions 307–316 are enriched in pro residues; the sequence is CPPPRTAPGY.

The protein belongs to the cuticular collagen family. Collagen polypeptide chains are complexed within the cuticle by disulfide bonds and other types of covalent cross-links.

In terms of biological role, nematode cuticles are composed largely of collagen-like proteins. The cuticle functions both as an exoskeleton and as a barrier to protect the worm from its environment. This is Cuticle collagen 13 (col-13) from Caenorhabditis elegans.